Here is a 176-residue protein sequence, read N- to C-terminus: uncharacterized protein (176 aa).

This sequence belongs to the mimivirus R160 family.

This is an uncharacterized protein from Acanthamoeba polyphaga mimivirus (APMV).